A 713-amino-acid polypeptide reads, in one-letter code: Metal transporter CNNM3 (713 aa).

Residues 7–29 (AVVGWLGWVLAAFCLGSTAGEAA) traverse the membrane as a helical segment. N-linked (GlcNAc...) asparagine glycosylation is present at N73. Residues 136–314 (EAAPPWALGL…DPYSDLSKGV (179 aa)) form the CNNM transmembrane domain. 4 helical membrane passes run 137–157 (AAPP…AAVA), 199–219 (CALG…AVLL), 227–247 (AVPA…VLPA), and 267–287 (LAVL…ELAA). 2 consecutive CBS domains span residues 324 to 385 (LTPL…CTPL) and 392 to 458 (YNHP…ILDE). A disordered region spans residues 664-713 (LPPSPENAELQAIPGSQTRLLGDKSRETAGSTNSRPSIPVEESPGRNPGV). A phosphoserine mark is found at S667 and S706.

The protein belongs to the ACDP family. As to expression, widely expressed with highest levels in brain, kidney, liver, lung and heart.

It localises to the cell membrane. Its function is as follows. Probable metal transporter. This Mus musculus (Mouse) protein is Metal transporter CNNM3 (Cnnm3).